Here is a 295-residue protein sequence, read N- to C-terminus: Nicotinate-nucleotide pyrophosphorylase [carboxylating] (295 aa).

Residues Arg107, 142-144 (TRK), Arg166, Lys176, Glu206, Asp227, and 256-258 (SGG) contribute to the substrate site.

The protein belongs to the NadC/ModD family. In terms of assembly, hexamer formed by 3 homodimers.

The protein resides in the cytoplasm. The protein localises to the nucleus. It carries out the reaction nicotinate beta-D-ribonucleotide + CO2 + diphosphate = quinolinate + 5-phospho-alpha-D-ribose 1-diphosphate + 2 H(+). Its pathway is cofactor biosynthesis; NAD(+) biosynthesis; nicotinate D-ribonucleotide from quinolinate: step 1/1. In terms of biological role, involved in the catabolism of quinolinic acid (QA). This Saccharomyces cerevisiae (strain ATCC 204508 / S288c) (Baker's yeast) protein is Nicotinate-nucleotide pyrophosphorylase [carboxylating] (BNA6).